The primary structure comprises 100 residues: MITQERLLKVLRAPHISEKATMAAEKANTIVFKVAKDATKKEIKAAVEQLFEVEVKSVNTLITKGKTKRQGLRQGRRSDVKKAYVTLKEGQDLDFVGGAE.

The protein belongs to the universal ribosomal protein uL23 family. In terms of assembly, part of the 50S ribosomal subunit. Contacts protein L29, and trigger factor when it is bound to the ribosome.

In terms of biological role, one of the early assembly proteins it binds 23S rRNA. One of the proteins that surrounds the polypeptide exit tunnel on the outside of the ribosome. Forms the main docking site for trigger factor binding to the ribosome. The polypeptide is Large ribosomal subunit protein uL23 (Vibrio vulnificus (strain CMCP6)).